The following is a 492-amino-acid chain: Chitooligosaccharide oxidase (492 aa).

An N-terminal signal peptide occupies residues 1 to 19 (MHFNTLTCVLVGLVAHTSA). Residues 57 to 229 (LPFEPAAIAV…VELEFQTFAA (173 aa)) enclose the FAD-binding PCMH-type domain. Positions 94 to 154 (HSYTSLGFGG…GKRALAHGTC (61 aa)) form a cross-link, 6-(S-cysteinyl)-8alpha-(pros-histidyl)-FAD (His-Cys).

It belongs to the oxygen-dependent FAD-linked oxidoreductase family. It depends on FAD as a cofactor. Post-translationally, the FAD cofactor is bound via a bicovalent 6-S-cysteinyl, 8alpha-N1-histidyl FAD linkage.

It is found in the secreted. The catalysed reaction is N,N'-diacetylchitobiose + O2 = N,N'-diacetylchitobiono-1,5-lactone + H2O2. The enzyme catalyses N,N',N''-triacetylchitotriose + O2 = N,N',N''-triacetylchitotriono-1,5-lactone + H2O2. It catalyses the reaction N,N',N'',N'''-tetraacetylchitotetraose + O2 = N,N',N'',N'''-tetraacetylchitotetraono-1,5-lactone + H2O2. In terms of biological role, catalyzes the selective oxidation of C1 hydroxyl moieties on chitooligosaccharides with concomitant reduction of molecular oxygen to hydrogen peroxide. This results in the formation of the corresponding lactones, which typically undergo spontaneous hydrolysis. Chitooligosaccharides are homo- or heterooligomers of N-acetylglucosamine (GlcNAc) and D-glucosamine which are linked through beta-1,4-glycosidic bonds. For optimal substrate binding at least 2 GlcNAc units are needed, and chitooligosaccharide oxidase is most efficient on chitobiose, chitotriose and chitotetraose. The sequence is that of Chitooligosaccharide oxidase from Gibberella zeae (strain ATCC MYA-4620 / CBS 123657 / FGSC 9075 / NRRL 31084 / PH-1) (Wheat head blight fungus).